Here is a 236-residue protein sequence, read N- to C-terminus: Sperm flagellar protein 1 (236 aa).

The region spanning 7–112 is the Calponin-homology (CH) domain; it reads EEALHQLYLW…VLIPLRQRLE (106 aa). Residues 118–177 form a disordered region; it reads RKQGIGSLQELAPQDGTDYMDVGLSQKARGEGVPDPQGRGQLREGRLPVPRPPGDSQALQ. The interval 183 to 236 is essential for homodimerization and microtubule bundling activity; it reads ILQIAEKEQELLASQETVQVLQMKVRRLEHLLQLKNVRIEDLSRRLQQAERKQR.

Homodimer. Interacts with actin, TJP1, CGN and CDH1.

It is found in the cytoplasm. It localises to the cell projection. The protein resides in the cilium. The protein localises to the flagellum. Its subcellular location is the cytoskeleton. It is found in the cilium axoneme. It localises to the apical cell membrane. The protein resides in the basolateral cell membrane. The protein localises to the stress fiber. Its subcellular location is the microvillus. It is found in the lamellipodium. It localises to the filopodium. Its function is as follows. Microtubule-associated protein involved in the stabilization of microtubules along the axis of migration during radial intercalation. Promotes the establishment and stabilization of an axis of microtubules required for the active migration of cells into the outer epithelium. Microtubule-associated protein that promotes microtubule bundling and stabilizes microtubules against depolymerization in response to cold shock. Essential for ciliary central apparatus formation which requires both its microtubule-binding and bundling activities and for ciliary localization of HYDIN and SPAG6 in ependymal cilia. Binds actin in intestinal epithelial cells (IECs), essential for IECs survival and contributes to formation of filopodia and lamellipodia in migrating IECs. Regulates planar cell polarity signaling pathway and asymmetric microtubule accumulation in ciliated epithelia. This chain is Sperm flagellar protein 1 (SPEF1), found in Bos taurus (Bovine).